A 474-amino-acid polypeptide reads, in one-letter code: MGSTAAPEGALGYVREFTRHSSDVLSNLNELRLRGILTDVTLLVGGQPLRAHKAVLIACSGFFYSIFRGRAGLGVDVLSLPGGPEARGFAPLLDFMYTSRLRLSPATAPAVLAAATYLQMEHVVQACHRFIQASYEPLGISLRPVEVEPPRPPTVAPPGSPRRSEGHPDPPTESRSCSQGSPSPASPDPKACNWKKYKFIVLNSQTSQAGSLVGESSGQPCPQARLPSGDEACSSSSSSEEGTTPGLQSRLSLATTTARFKCGALANNSYLFTPRAQETSLPASKQANPPPGSEFFSCQNCEAVAGCSSGLELLAPGDEDKPYKCQLCRSAFRYKGNLASHRTVHTGEKPYRCSICGARFNRPANLKTHSRIHSGEKPYKCETCGSRFVQVAHLRAHVLIHTGEKPYPCPTCGTRFRHLQTLKSHVRIHTGEKPYHCDPCGLHFRHKSQLRLHLRQKHGAATNTKVRYHILGGP.

Positions Thr-38 to Pro-105 constitute a BTB domain. Disordered stretches follow at residues Pro-144 to Lys-190 and Gly-210 to Ser-249. Over residues Pro-150–Ser-160 the composition is skewed to pro residues. The span at Arg-162–Thr-172 shows a compositional bias: basic and acidic residues. Polar residues-rich tracts occupy residues Glu-173 to Ser-183, Gly-210 to Pro-220, and Glu-240 to Ser-249. C2H2-type zinc fingers lie at residues Tyr-323–His-345, Tyr-351–His-373, Tyr-379–His-401, Tyr-407–His-429, and Tyr-435–His-458.

As to quaternary structure, associates with BCL6 through the BTB domain. As to expression, ubiquitously expressed with higher expression found in heart and lung.

The protein resides in the nucleus. Its function is as follows. Acts as a sequence-specific transcriptional repressor in association with BCL6. Necessary for activation of naive T-cells to antigenic stimulation. May attenuate the regulatory effect of BCL6 on antigenic activation of naive CD4 T-cells by forming a heterodimer with BCL6. This Mus musculus (Mouse) protein is B-cell CLL/lymphoma 6 member B protein (Bcl6b).